Here is a 412-residue protein sequence, read N- to C-terminus: Translation initiation factor 2 subunit gamma (412 aa).

The tr-type G domain occupies 7-203 (QPEVNIGLVG…AIESEIPTPD (197 aa)). The interval 16 to 23 (GHVDHGKT) is G1. Residues D19, T23, G44, and S46 each contribute to the Mg(2+) site. Position 19 to 24 (19 to 24 (DHGKTT)) interacts with GTP. The segment at 44 to 48 (GISIR) is G2. The tract at residues 90 to 93 (DAPG) is G3. Residues 146-149 (NKVD) and 181-183 (SAQ) contribute to the GTP site. Residues 146 to 149 (NKVD) form a G4 region. Positions 181 to 183 (SAQ) are G5.

Belongs to the TRAFAC class translation factor GTPase superfamily. Classic translation factor GTPase family. EIF2G subfamily. Heterotrimer composed of an alpha, a beta and a gamma chain. It depends on Mg(2+) as a cofactor.

The catalysed reaction is GTP + H2O = GDP + phosphate + H(+). In terms of biological role, eIF-2 functions in the early steps of protein synthesis by forming a ternary complex with GTP and initiator tRNA. This Halorubrum lacusprofundi (strain ATCC 49239 / DSM 5036 / JCM 8891 / ACAM 34) protein is Translation initiation factor 2 subunit gamma.